The sequence spans 125 residues: Glycine cleavage system H protein (125 aa).

Residues 23-105 (VSTVGITEHA…FEGGWLFKVR (83 aa)) form the Lipoyl-binding domain. N6-lipoyllysine is present on K64.

The protein belongs to the GcvH family. As to quaternary structure, the glycine cleavage system is composed of four proteins: P, T, L and H. The cofactor is (R)-lipoate.

Functionally, the glycine cleavage system catalyzes the degradation of glycine. The H protein shuttles the methylamine group of glycine from the P protein to the T protein. The sequence is that of Glycine cleavage system H protein from Streptomyces avermitilis (strain ATCC 31267 / DSM 46492 / JCM 5070 / NBRC 14893 / NCIMB 12804 / NRRL 8165 / MA-4680).